A 211-amino-acid chain; its full sequence is Small ribosomal subunit protein uS3 (211 aa).

Residues 16–85 (IDEYFKTKLV…NPQIEVKQVE (70 aa)) enclose the KH type-2 domain.

The protein belongs to the universal ribosomal protein uS3 family. Part of the 30S ribosomal subunit.

Functionally, binds the lower part of the 30S subunit head. This is Small ribosomal subunit protein uS3 from Methanococcus maripaludis (strain C7 / ATCC BAA-1331).